We begin with the raw amino-acid sequence, 618 residues long: Phostensin (618 aa).

Positions 15-33 (RRQEEAAVRGREKAERERL) are enriched in basic and acidic residues. A disordered region spans residues 15–505 (RRQEEAAVRG…PATADAAVPG (491 aa)). Ser-54 carries the phosphoserine modification. A compositionally biased stretch (low complexity) spans 96–109 (QQQQQQQQQQQQQQ). Composition is skewed to basic and acidic residues over residues 110–160 (RSEE…ERRL) and 173–197 (LESRDWRQSPGEAGDRSSRLSEVRK). Phosphoserine is present on residues Ser-131, Ser-139, Ser-181, and Ser-201. The residue at position 205 (Thr-205) is a Phosphothreonine. Ser-231 is subject to Phosphoserine. Basic and acidic residues-rich tracts occupy residues 234–245 (DSDHEKLGLTDA) and 271–289 (SGEERKDCLEECGRKEERT). Low complexity predominate over residues 308 to 319 (EAAGSSSGGVEA). The span at 348–358 (KVRDRTPRDTE) shows a compositional bias: basic and acidic residues. Pro residues predominate over residues 429–451 (RPPPAAPLSPPPPAPPAPQPPGD). Phosphoserine is present on Ser-437. Lys-462 carries the N6-acetyllysine modification. The span at 485 to 505 (APPAAAATPATPATADAAVPG) shows a compositional bias: low complexity. Ser-535 bears the Phosphoserine mark. Residues 556–594 (YQYPSESSVLEELGPEPEAPSAPSPPAAQPDDEEDEEEL) are disordered. The segment covering 572–583 (PEAPSAPSPPAA) has biased composition (pro residues). Over residues 585–594 (PDDEEDEEEL) the composition is skewed to acidic residues.

Interacts with Protein phosphatase 1 (PP1).

It localises to the cytoplasm. It is found in the cytoskeleton. Its function is as follows. May target protein phosphatase 1 to F-actin cytoskeleton. The polypeptide is Phostensin (PPP1R18) (Sus scrofa (Pig)).